A 455-amino-acid chain; its full sequence is Glutamyl-tRNA reductase (455 aa).

Substrate-binding positions include 49–52 (TCNR), Ser109, 114–116 (EAQ), and Gln120. Cys50 (nucleophile) is an active-site residue. 190 to 195 (GAGAMG) lines the NADP(+) pocket.

This sequence belongs to the glutamyl-tRNA reductase family. Homodimer.

The catalysed reaction is (S)-4-amino-5-oxopentanoate + tRNA(Glu) + NADP(+) = L-glutamyl-tRNA(Glu) + NADPH + H(+). It participates in porphyrin-containing compound metabolism; protoporphyrin-IX biosynthesis; 5-aminolevulinate from L-glutamyl-tRNA(Glu): step 1/2. Catalyzes the NADPH-dependent reduction of glutamyl-tRNA(Glu) to glutamate 1-semialdehyde (GSA). The chain is Glutamyl-tRNA reductase from Salinispora tropica (strain ATCC BAA-916 / DSM 44818 / JCM 13857 / NBRC 105044 / CNB-440).